The following is a 329-amino-acid chain: Prostaglandin reductase 1 (329 aa).

Residue threonine 18 is modified to Phosphothreonine. Residues 152 to 155 (GAVG), lysine 178, tyrosine 193, asparagine 217, 239 to 245 (CGAISQY), 270 to 272 (FIV), and asparagine 321 contribute to the NADP(+) site. N6-(2-hydroxyisobutyryl)lysine; alternate is present on lysine 178. Lysine 178 carries the N6-acetyllysine; alternate modification.

Belongs to the NADP-dependent oxidoreductase L4BD family. Monomer or homodimer.

The protein localises to the cytoplasm. It carries out the reaction 13,14-dihydro-15-oxo-prostaglandin E1 + NADP(+) = 15-oxoprostaglandin E1 + NADPH + H(+). It catalyses the reaction 13,14-dihydro-15-oxo-prostaglandin E2 + NADP(+) = 15-oxoprostaglandin E2 + NADPH + H(+). The enzyme catalyses 13,14-dihydro-15-oxo-prostaglandin F1alpha + NADP(+) = 15-oxoprostaglandin F1alpha + NADPH + H(+). The catalysed reaction is 13,14-dihydro-15-oxo-PGF2alpha + NADP(+) = 15-oxoprostaglandin F2alpha + NADPH + H(+). It carries out the reaction leukotriene B4 + NADP(+) = 12-oxo-leukotriene B4 + NADPH + H(+). It catalyses the reaction 20-hydroxy-leukotriene B4 + NADP(+) = 12-oxo-20-hydroxy-leukotriene B4 + NADPH + H(+). The enzyme catalyses 6-trans-leukotriene B4 + NADP(+) = 12-oxo-(5S)-hydroxy-(6E,8E,10E,14Z)-eicosatetraenoate + NADPH + H(+). The catalysed reaction is (5S,12S)-dihydroxy-(6E,10E,12E,14Z)-eicosatetraenoate + NADP(+) = 12-oxo-(5S)-hydroxy-(6E,8E,10E,14Z)-eicosatetraenoate + NADPH + H(+). It carries out the reaction an n-alkanal + NADP(+) = an alk-2-enal + NADPH + H(+). It catalyses the reaction hexanal + NADP(+) = (E)-hex-2-enal + NADPH + H(+). The enzyme catalyses octanal + NADP(+) = (2E)-octenal + NADPH + H(+). The catalysed reaction is decanal + NADP(+) = (2E)-decenal + NADPH + H(+). It carries out the reaction dodecanal + NADP(+) = (2E)-dodecenal + NADPH + H(+). It catalyses the reaction 4-hydroxynonanal + NADP(+) = (E)-4-hydroxynon-2-enal + NADPH + H(+). The enzyme catalyses pentan-2-one + NADP(+) = (E)-pent-3-en-2-one + NADPH + H(+). The catalysed reaction is nonan-2-one + NADP(+) = (3E)-nonen-2-one + NADPH + H(+). Its function is as follows. NAD(P)H-dependent oxidoreductase involved in metabolic inactivation of pro- and anti-inflammatory eicosanoids: prostaglandins (PG), leukotrienes (LT) and lipoxins (LX). Catalyzes with high efficiency the reduction of the 13,14 double bond of 15-oxoPGs, including 15-oxo-PGE1, 15-oxo-PGE2, 15-oxo-PGF1-alpha and 15-oxo-PGF2-alpha. Catalyzes with lower efficiency the oxidation of the hydroxyl group at C12 of LTB4 and its derivatives, converting them into biologically less active 12-oxo-LTB4 metabolites. Reduces 15-oxo-LXA4 to 13,14 dihydro-15-oxo-LXA4, enhancing neutrophil recruitment at the inflammatory site. Plays a role in metabolic detoxification of alkenals and ketones. Reduces alpha,beta-unsaturated alkenals and ketones, particularly those with medium-chain length, showing highest affinity toward (2E)-decenal and (3E)-3-nonen-2-one. May inactivate 4-hydroxy-2-nonenal, a cytotoxic lipid constituent of oxidized low-density lipoprotein particles. This chain is Prostaglandin reductase 1 (Ptgr1), found in Mus musculus (Mouse).